The sequence spans 509 residues: Subtelomeric hrmA-associated cluster protein AFUA_5G14880 (509 aa).

In terms of biological role, part of the subtelomeric hrmA-associated cluster (HAC) containing genes that alter the hyphal surface (such as reduced total chitin or increased beta-glucan exposure) and perturb inter-hyphal interactions within the developing biofilms, resulting in a loss of vertically aligned polarized growing filaments. Consequently, this hypoxia-typic morphotype (called H-MORPH) with altered biofilm architecture leads to increased hypoxia fitness, increased host inflammation, rapid disease progression, and mortality in a murine model of invasive aspergillosis. This chain is Subtelomeric hrmA-associated cluster protein AFUA_5G14880, found in Aspergillus fumigatus (strain ATCC MYA-4609 / CBS 101355 / FGSC A1100 / Af293) (Neosartorya fumigata).